A 763-amino-acid chain; its full sequence is Phosphoglycerol transferase I (763 aa).

4 consecutive transmembrane segments (helical) span residues 4-19 (LLSVALFLASVLIYAW), 26-48 (WWFAATLTVLGLFVILNITLYAS), 76-98 (YILPGIGIALALVAVFGALGWVL), and 110-132 (YSLLALLLALGSVDASPAFRQIT).

This sequence belongs to the OpgB family.

It localises to the cell inner membrane. It catalyses the reaction a phosphatidylglycerol + a membrane-derived-oligosaccharide D-glucose = a 1,2-diacyl-sn-glycerol + a membrane-derived-oligosaccharide 6-(glycerophospho)-D-glucose.. It functions in the pathway glycan metabolism; osmoregulated periplasmic glucan (OPG) biosynthesis. Its function is as follows. Transfers a phosphoglycerol residue from phosphatidylglycerol to the membrane-bound nascent glucan backbones. The protein is Phosphoglycerol transferase I of Salmonella typhi.